A 127-amino-acid chain; its full sequence is MAKTPTRKKSKKVIIDGIAHIHATFNNTIVMITDRHGNAICWSASGGSGFRGSRKSTPFAAQVTAGSCGEKALAFGMKNLEVRVKGPGPGRDSAIRGLNAQGLKIQSITDVTPIPHNGCRPSKKRRV.

This sequence belongs to the universal ribosomal protein uS11 family. As to quaternary structure, part of the 30S ribosomal subunit. Interacts with proteins S7 and S18. Binds to IF-3.

Its function is as follows. Located on the platform of the 30S subunit, it bridges several disparate RNA helices of the 16S rRNA. Forms part of the Shine-Dalgarno cleft in the 70S ribosome. The protein is Small ribosomal subunit protein uS11 of Ruthia magnifica subsp. Calyptogena magnifica.